We begin with the raw amino-acid sequence, 113 residues long: Endoribonuclease SymE (113 aa).

One can recognise a SpoVT-AbrB domain in the interval 29-74 (SRYPDYSRIPAITLKGQWLEAAGFATGTAVDVKVMEGCIVLTAQPA).

The protein belongs to the SymE family.

The protein resides in the cytoplasm. Functionally, involved in the degradation and recycling of damaged RNA. It is itself a target for degradation by the ATP-dependent protease Lon. This Shigella flexneri serotype 5b (strain 8401) protein is Endoribonuclease SymE.